Reading from the N-terminus, the 186-residue chain is Peptide deformylase (186 aa).

Fe cation contacts are provided by cysteine 113 and histidine 156. Glutamate 157 is a catalytic residue. Residue histidine 160 coordinates Fe cation.

The protein belongs to the polypeptide deformylase family. It depends on Fe(2+) as a cofactor.

It carries out the reaction N-terminal N-formyl-L-methionyl-[peptide] + H2O = N-terminal L-methionyl-[peptide] + formate. Removes the formyl group from the N-terminal Met of newly synthesized proteins. Requires at least a dipeptide for an efficient rate of reaction. N-terminal L-methionine is a prerequisite for activity but the enzyme has broad specificity at other positions. This Lactiplantibacillus plantarum (strain ATCC BAA-793 / NCIMB 8826 / WCFS1) (Lactobacillus plantarum) protein is Peptide deformylase.